The chain runs to 231 residues: MLKLQKKLKNDYGLVFNDEYLLKTAFTHSSFTNEERLPKIANNERLEFLGDVALSLVISDYLYRTYPEKLEGELSKMRSSIVRTESLANFSRSCGFGEFLRLGHGEEKMGGRDRETTLENLFEAFLGALFIDQGMDEVRKFIQHVVIPHVKNDDYVKVIDYKTELQEVLQIGGETTISYKILKEEGPAHDRSFVAAVFNNGKELGRGLGKSKKVAEQKAAENAIKGQNHVS.

The 130-residue stretch at 5-134 (QKKLKNDYGL…FLGALFIDQG (130 aa)) folds into the RNase III domain. Residue E47 participates in Mg(2+) binding. Residue D51 is part of the active site. The Mg(2+) site is built by N120 and E123. E123 is a catalytic residue. In terms of domain architecture, DRBM spans 160 to 229 (DYKTELQEVL…AENAIKGQNH (70 aa)).

Belongs to the ribonuclease III family. Homodimer. It depends on Mg(2+) as a cofactor.

The protein resides in the cytoplasm. It catalyses the reaction Endonucleolytic cleavage to 5'-phosphomonoester.. Digests double-stranded RNA. Involved in the processing of primary rRNA transcript to yield the immediate precursors to the large and small rRNAs (23S and 16S). Processes some mRNAs, and tRNAs when they are encoded in the rRNA operon. Processes pre-crRNA and tracrRNA of type II CRISPR loci if present in the organism. This chain is Ribonuclease 3, found in Lactococcus lactis subsp. cremoris (strain MG1363).